A 433-amino-acid chain; its full sequence is UDP-N-acetylglucosamine 1-carboxyvinyltransferase (433 aa).

34-35 provides a ligand contact to phosphoenolpyruvate; sequence KN. Arginine 104 is a binding site for UDP-N-acetyl-alpha-D-glucosamine. The active-site Proton donor is the cysteine 128. Cysteine 128 is modified (2-(S-cysteinyl)pyruvic acid O-phosphothioketal). UDP-N-acetyl-alpha-D-glucosamine is bound by residues aspartate 320 and isoleucine 342.

This sequence belongs to the EPSP synthase family. MurA subfamily.

The protein localises to the cytoplasm. It carries out the reaction phosphoenolpyruvate + UDP-N-acetyl-alpha-D-glucosamine = UDP-N-acetyl-3-O-(1-carboxyvinyl)-alpha-D-glucosamine + phosphate. It functions in the pathway cell wall biogenesis; peptidoglycan biosynthesis. Its function is as follows. Cell wall formation. Adds enolpyruvyl to UDP-N-acetylglucosamine. The polypeptide is UDP-N-acetylglucosamine 1-carboxyvinyltransferase (Synechococcus sp. (strain CC9605)).